The following is a 407-amino-acid chain: DNA primase DnaG (407 aa).

The Toprim domain occupies 172-248 (DWIIVVEGRA…HIDYVARAPP (77 aa)). Residues Glu178, Asp222, and Asp224 each coordinate Mg(2+). Positions 279–304 (AGAEKTEAAAPPPQQPTAPPAAPSQQ) are disordered. The span at 288–300 (APPPQQPTAPPAA) shows a compositional bias: pro residues.

The protein belongs to the archaeal DnaG primase family. As to quaternary structure, forms a ternary complex with MCM helicase and DNA. Component of the archaeal exosome complex. Requires Mg(2+) as cofactor.

It catalyses the reaction ssDNA + n NTP = ssDNA/pppN(pN)n-1 hybrid + (n-1) diphosphate.. Its function is as follows. RNA polymerase that catalyzes the synthesis of short RNA molecules used as primers for DNA polymerase during DNA replication. Also part of the exosome, which is a complex involved in RNA degradation. Acts as a poly(A)-binding protein that enhances the interaction between heteromeric, adenine-rich transcripts and the exosome. The chain is DNA primase DnaG from Pyrobaculum calidifontis (strain DSM 21063 / JCM 11548 / VA1).